Consider the following 533-residue polypeptide: Sterol 26-hydroxylase, mitochondrial (533 aa).

A mitochondrion-targeting transit peptide spans 1-32 (MAVLSRMRLRWALLDTRVMGHGLCPQGARAKA). The disordered stretch occupies residues 38-58 (LRDHESTEGPGTGQDRPRLRS). K142 and K375 each carry N6-acetyllysine. The interval 386-400 (PLLKAVIKETLRLYP) is sterol-binding. C479 provides a ligand contact to heme. An N6-acetyllysine mark is found at K512 and K523.

It belongs to the cytochrome P450 family. Interacts with HSP70; this interaction is required for initial targeting to mitochondria. Heme serves as cofactor. As to expression, expressed in liver, kidney and ovary.

Its subcellular location is the mitochondrion inner membrane. It catalyses the reaction 5beta-cholestane-3alpha,7alpha,12alpha-triol + 6 reduced [adrenodoxin] + 3 O2 + 5 H(+) = (25R)-3alpha,7alpha,12alpha-trihydroxy-5beta-cholestan-26-oate + 6 oxidized [adrenodoxin] + 4 H2O. The catalysed reaction is cholestanol + 2 reduced [adrenodoxin] + O2 + 2 H(+) = (25R)-26-hydroxycholestanol + 2 oxidized [adrenodoxin] + H2O. The enzyme catalyses (25R)-3beta-hydroxycholest-5-en-7-one-26-al + 2 reduced [adrenodoxin] + O2 + H(+) = (25R)-3beta-hydroxycholest-5-en-7-one-26-oate + 2 oxidized [adrenodoxin] + H2O. It carries out the reaction (25R)-3beta,26-dihydroxycholest-5-en-7-one + 2 reduced [adrenodoxin] + O2 + 2 H(+) = (25R)-3beta-hydroxycholest-5-en-7-one-26-al + 2 oxidized [adrenodoxin] + 2 H2O. It catalyses the reaction 7-oxocholesterol + 2 reduced [adrenodoxin] + O2 + 2 H(+) = (25R)-3beta,26-dihydroxycholest-5-en-7-one + 2 oxidized [adrenodoxin] + H2O. The catalysed reaction is calciol + 2 reduced [adrenodoxin] + O2 + 2 H(+) = calcidiol + 2 oxidized [adrenodoxin] + H2O. The enzyme catalyses (25R)-5beta-cholestane-3alpha,7alpha,12alpha,26-tetrol + 2 reduced [adrenodoxin] + O2 + 2 H(+) = (25R)-3alpha,7alpha,12alpha-trihydroxy-5beta-cholestan-26-al + 2 oxidized [adrenodoxin] + 2 H2O. It carries out the reaction 2 reduced [adrenodoxin] + cholesterol + O2 + 2 H(+) = (25R)-cholest-5-ene-3beta,26-diol + 2 oxidized [adrenodoxin] + H2O. It catalyses the reaction (25R)-3beta,4beta-dihydroxycholest-5-en-26-al + 2 reduced [adrenodoxin] + O2 + H(+) = (25R)-3beta,4beta-dihydroxycholest-5-en-26-oate + 2 oxidized [adrenodoxin] + H2O. The catalysed reaction is (25R)-4beta,26-dihydroxycholesterol + 2 reduced [adrenodoxin] + O2 + 2 H(+) = (25R)-3beta,4beta-dihydroxycholest-5-en-26-al + 2 oxidized [adrenodoxin] + 2 H2O. The enzyme catalyses 4beta-hydroxycholesterol + 2 reduced [adrenodoxin] + O2 + 2 H(+) = (25R)-4beta,26-dihydroxycholesterol + 2 oxidized [adrenodoxin] + H2O. It carries out the reaction (25R)-3beta-hydroxy-5-cholesten-26-al + 2 reduced [adrenodoxin] + O2 + H(+) = (25R)-3beta-hydroxy-5-cholestenoate + 2 oxidized [adrenodoxin] + H2O. It catalyses the reaction (25R)-cholest-5-ene-3beta,26-diol + 2 reduced [adrenodoxin] + O2 + 2 H(+) = (25R)-3beta-hydroxy-5-cholesten-26-al + 2 oxidized [adrenodoxin] + 2 H2O. The catalysed reaction is (25R)-3alpha,7alpha,12alpha-trihydroxy-5beta-cholestan-26-al + 2 reduced [adrenodoxin] + O2 + H(+) = (25R)-3alpha,7alpha,12alpha-trihydroxy-5beta-cholestan-26-oate + 2 oxidized [adrenodoxin] + H2O. The enzyme catalyses 5beta-cholestane-3alpha,7alpha,12alpha-triol + 2 reduced [adrenodoxin] + O2 + 2 H(+) = (25R)-5beta-cholestane-3alpha,7alpha,12alpha,26-tetrol + 2 oxidized [adrenodoxin] + H2O. The protein operates within hormone biosynthesis; cholecalciferol biosynthesis. It functions in the pathway steroid metabolism; cholesterol degradation. It participates in lipid metabolism; bile acid biosynthesis. Its function is as follows. Cytochrome P450 monooxygenase that catalyzes regio- and stereospecific hydroxylation of cholesterol and its derivatives. Hydroxylates (with R stereochemistry) the terminal methyl group of cholesterol side-chain in a three step reaction to yield at first a C26 alcohol, then a C26 aldehyde and finally a C26 acid. Regulates cholesterol homeostasis by catalyzing the conversion of excess cholesterol to bile acids via both the 'neutral' (classic) and the 'acid' (alternative) pathways. May also regulate cholesterol homeostasis via generation of active oxysterols, which act as ligands for NR1H2 and NR1H3 nuclear receptors, modulating the transcription of genes involved in lipid metabolism. Plays a role in cholestanol metabolism in the cerebellum. Similarly to cholesterol, hydroxylates cholestanol and may facilitate sterol diffusion through the blood-brain barrier to the systemic circulation for further degradation. Also hydroxylates retinal 7-ketocholesterol, a noxious oxysterol with pro-inflammatory and pro-apoptotic effects, and may play a role in its elimination from the retinal pigment epithelium. May play a redundant role in vitamin D biosynthesis. Catalyzes 25-hydroxylation of vitamin D3 that is required for its conversion to a functionally active form. This chain is Sterol 26-hydroxylase, mitochondrial (Cyp27a1), found in Rattus norvegicus (Rat).